We begin with the raw amino-acid sequence, 208 residues long: MIRVAMTKGRIQKQVTILLEQAGFDMTAVREMGRELVVTIPDDLEIIFGKANDVITFLEHGIVDIGFVGKDTLDENDFDDYYELLDLKVGQCIFALASYPDFLNKKFHRRKRIASKYPRITKNYFAQKQEDIEIIKLEGSVELGPVVGLADAIVDIVETGNTLSANGLVVIEKISQISTRMIVNKVSFKFKKDKIIEIVERLENAQTN.

The protein belongs to the ATP phosphoribosyltransferase family. Short subfamily. As to quaternary structure, heteromultimer composed of HisG and HisZ subunits.

It localises to the cytoplasm. The enzyme catalyses 1-(5-phospho-beta-D-ribosyl)-ATP + diphosphate = 5-phospho-alpha-D-ribose 1-diphosphate + ATP. The protein operates within amino-acid biosynthesis; L-histidine biosynthesis; L-histidine from 5-phospho-alpha-D-ribose 1-diphosphate: step 1/9. Functionally, catalyzes the condensation of ATP and 5-phosphoribose 1-diphosphate to form N'-(5'-phosphoribosyl)-ATP (PR-ATP). Has a crucial role in the pathway because the rate of histidine biosynthesis seems to be controlled primarily by regulation of HisG enzymatic activity. The protein is ATP phosphoribosyltransferase of Lactococcus lactis subsp. cremoris (strain MG1363).